The chain runs to 681 residues: CAI-1 autoinducer sensor kinase/phosphatase CqsS (681 aa).

Helical transmembrane passes span Leu-17 to Phe-37, Ala-73 to Met-93, Ile-112 to Ala-132, and Met-148 to Phe-168. The region spanning Gly-187–Gly-413 is the Histidine kinase domain. Residue His-190 is modified to Phosphohistidine; by autocatalysis. In terms of domain architecture, Response regulatory spans Thr-564 to Ile-681. A 4-aspartylphosphate modification is found at Asp-613.

It is found in the cell membrane. The catalysed reaction is ATP + protein L-histidine = ADP + protein N-phospho-L-histidine.. In terms of biological role, senses the quorum-sensing autoinducer CAI-1 ((S)-3-hydroxytridecan-4-one) which probably functions as an intragenus signal. The sensory signal is then relayed to LuxU and LuxO. The chain is CAI-1 autoinducer sensor kinase/phosphatase CqsS (cqsS) from Vibrio campbellii (strain ATCC BAA-1116).